The sequence spans 456 residues: GTPase Der (456 aa).

EngA-type G domains lie at 2–167 (LKVA…DQFG) and 176–351 (ATFC…AQLK). Residues 8–15 (GKPNVGKS), 55–59 (DTGGL), 118–121 (NKIE), 182–189 (GKPNVGKS), 229–233 (DTAGI), and 294–297 (NKWD) each bind GTP. One can recognise a KH-like domain in the interval 352–436 (IKISTSLLND…PITLYFKSKN (85 aa)).

Belongs to the TRAFAC class TrmE-Era-EngA-EngB-Septin-like GTPase superfamily. EngA (Der) GTPase family. In terms of assembly, associates with the 50S ribosomal subunit.

Functionally, GTPase that plays an essential role in the late steps of ribosome biogenesis. The protein is GTPase Der of Mycoplasmoides gallisepticum (strain R(low / passage 15 / clone 2)) (Mycoplasma gallisepticum).